The chain runs to 165 residues: Cysteine-rich hydrophobic domain-containing protein 2 (165 aa).

A coiled-coil region spans residues 1–26 (MADFDEIYEEEEDEERALEEQLLKYS). The CHIC motif (Cys-rich) signature appears at 88–106 (CGCLCCCCTLGCSMWPVIC).

Belongs to the CHIC family. Palmitoylation in the CHIC motif is required for membrane association.

The protein localises to the cell membrane. It localises to the cytoplasmic vesicle. This Homo sapiens (Human) protein is Cysteine-rich hydrophobic domain-containing protein 2 (CHIC2).